The following is a 289-amino-acid chain: tRNA pseudouridine synthase B (289 aa).

The active-site Nucleophile is Asp-38.

The protein belongs to the pseudouridine synthase TruB family. Type 1 subfamily.

The enzyme catalyses uridine(55) in tRNA = pseudouridine(55) in tRNA. Responsible for synthesis of pseudouridine from uracil-55 in the psi GC loop of transfer RNAs. This chain is tRNA pseudouridine synthase B, found in Acaryochloris marina (strain MBIC 11017).